The sequence spans 561 residues: Dihydroxy-acid dehydratase (561 aa).

Cys50 provides a ligand contact to [2Fe-2S] cluster. Asp82 contacts Mg(2+). Cys123 is a [2Fe-2S] cluster binding site. Mg(2+) is bound by residues Asp124 and Lys125. Lys125 bears the N6-carboxylysine mark. Residue Cys195 coordinates [2Fe-2S] cluster. Glu447 is a binding site for Mg(2+). Ser473 serves as the catalytic Proton acceptor.

It belongs to the IlvD/Edd family. As to quaternary structure, homodimer. It depends on [2Fe-2S] cluster as a cofactor. The cofactor is Mg(2+).

The enzyme catalyses (2R)-2,3-dihydroxy-3-methylbutanoate = 3-methyl-2-oxobutanoate + H2O. The catalysed reaction is (2R,3R)-2,3-dihydroxy-3-methylpentanoate = (S)-3-methyl-2-oxopentanoate + H2O. It participates in amino-acid biosynthesis; L-isoleucine biosynthesis; L-isoleucine from 2-oxobutanoate: step 3/4. Its pathway is amino-acid biosynthesis; L-valine biosynthesis; L-valine from pyruvate: step 3/4. In terms of biological role, functions in the biosynthesis of branched-chain amino acids. Catalyzes the dehydration of (2R,3R)-2,3-dihydroxy-3-methylpentanoate (2,3-dihydroxy-3-methylvalerate) into 2-oxo-3-methylpentanoate (2-oxo-3-methylvalerate) and of (2R)-2,3-dihydroxy-3-methylbutanoate (2,3-dihydroxyisovalerate) into 2-oxo-3-methylbutanoate (2-oxoisovalerate), the penultimate precursor to L-isoleucine and L-valine, respectively. This Rippkaea orientalis (strain PCC 8801 / RF-1) (Cyanothece sp. (strain PCC 8801)) protein is Dihydroxy-acid dehydratase.